Consider the following 329-residue polypeptide: Phenylalanine--tRNA ligase alpha subunit (329 aa).

Mg(2+) is bound at residue E254.

Belongs to the class-II aminoacyl-tRNA synthetase family. Phe-tRNA synthetase alpha subunit type 1 subfamily. In terms of assembly, tetramer of two alpha and two beta subunits. The cofactor is Mg(2+).

The protein resides in the cytoplasm. It catalyses the reaction tRNA(Phe) + L-phenylalanine + ATP = L-phenylalanyl-tRNA(Phe) + AMP + diphosphate + H(+). The polypeptide is Phenylalanine--tRNA ligase alpha subunit (pheS) (Haemophilus influenzae (strain ATCC 51907 / DSM 11121 / KW20 / Rd)).